Consider the following 104-residue polypeptide: Pyrimidine/purine nucleoside phosphorylase (104 aa).

Belongs to the nucleoside phosphorylase PpnP family.

It catalyses the reaction a purine D-ribonucleoside + phosphate = a purine nucleobase + alpha-D-ribose 1-phosphate. It carries out the reaction adenosine + phosphate = alpha-D-ribose 1-phosphate + adenine. The enzyme catalyses cytidine + phosphate = cytosine + alpha-D-ribose 1-phosphate. The catalysed reaction is guanosine + phosphate = alpha-D-ribose 1-phosphate + guanine. It catalyses the reaction inosine + phosphate = alpha-D-ribose 1-phosphate + hypoxanthine. It carries out the reaction thymidine + phosphate = 2-deoxy-alpha-D-ribose 1-phosphate + thymine. The enzyme catalyses uridine + phosphate = alpha-D-ribose 1-phosphate + uracil. The catalysed reaction is xanthosine + phosphate = alpha-D-ribose 1-phosphate + xanthine. Its function is as follows. Catalyzes the phosphorolysis of diverse nucleosides, yielding D-ribose 1-phosphate and the respective free bases. Can use uridine, adenosine, guanosine, cytidine, thymidine, inosine and xanthosine as substrates. Also catalyzes the reverse reactions. This Hydrogenovibrio crunogenus (strain DSM 25203 / XCL-2) (Thiomicrospira crunogena) protein is Pyrimidine/purine nucleoside phosphorylase.